A 128-amino-acid chain; its full sequence is Ribonuclease P protein component (128 aa).

It belongs to the RnpA family. As to quaternary structure, consists of a catalytic RNA component (M1 or rnpB) and a protein subunit.

It catalyses the reaction Endonucleolytic cleavage of RNA, removing 5'-extranucleotides from tRNA precursor.. In terms of biological role, RNaseP catalyzes the removal of the 5'-leader sequence from pre-tRNA to produce the mature 5'-terminus. It can also cleave other RNA substrates such as 4.5S RNA. The protein component plays an auxiliary but essential role in vivo by binding to the 5'-leader sequence and broadening the substrate specificity of the ribozyme. The polypeptide is Ribonuclease P protein component (Synechococcus sp. (strain CC9902)).